The primary structure comprises 360 residues: Phospho-N-acetylmuramoyl-pentapeptide-transferase (360 aa).

Transmembrane regions (helical) follow at residues 25–45 (RGIL…PWMI), 73–93 (TMGG…WADL), 97–117 (YVWV…VDDY), 135–155 (FWQS…APSA), 170–190 (IPLG…SSNA), 199–219 (GLAI…CYLS), 236–256 (AGEL…FLWF), 263–283 (VFMG…MAVI), 288–308 (MVLF…VIQV), and 338–358 (VIVR…ATLK).

The protein belongs to the glycosyltransferase 4 family. MraY subfamily. Mg(2+) is required as a cofactor.

It localises to the cell inner membrane. The catalysed reaction is UDP-N-acetyl-alpha-D-muramoyl-L-alanyl-gamma-D-glutamyl-meso-2,6-diaminopimeloyl-D-alanyl-D-alanine + di-trans,octa-cis-undecaprenyl phosphate = di-trans,octa-cis-undecaprenyl diphospho-N-acetyl-alpha-D-muramoyl-L-alanyl-D-glutamyl-meso-2,6-diaminopimeloyl-D-alanyl-D-alanine + UMP. Its pathway is cell wall biogenesis; peptidoglycan biosynthesis. Catalyzes the initial step of the lipid cycle reactions in the biosynthesis of the cell wall peptidoglycan: transfers peptidoglycan precursor phospho-MurNAc-pentapeptide from UDP-MurNAc-pentapeptide onto the lipid carrier undecaprenyl phosphate, yielding undecaprenyl-pyrophosphoryl-MurNAc-pentapeptide, known as lipid I. The protein is Phospho-N-acetylmuramoyl-pentapeptide-transferase of Pseudomonas syringae pv. syringae (strain B728a).